The sequence spans 142 residues: Large ribosomal subunit protein bL17 (142 aa).

The protein belongs to the bacterial ribosomal protein bL17 family. Part of the 50S ribosomal subunit. Contacts protein L32.

The chain is Large ribosomal subunit protein bL17 from Chlamydia pneumoniae (Chlamydophila pneumoniae).